Consider the following 193-residue polypeptide: Outer-membrane lipoprotein LolB (193 aa).

Positions 1–21 (MRPARRFLAALACVAGALLSA) are cleaved as a signal peptide. Cysteine 22 carries N-palmitoyl cysteine lipidation. Residue cysteine 22 is the site of S-diacylglycerol cysteine attachment.

It belongs to the LolB family. As to quaternary structure, monomer.

The protein localises to the cell outer membrane. Its function is as follows. Plays a critical role in the incorporation of lipoproteins in the outer membrane after they are released by the LolA protein. The protein is Outer-membrane lipoprotein LolB of Azoarcus sp. (strain BH72).